The sequence spans 174 residues: Bifunctional protein PyrR (174 aa).

Positions 97–109 (VVIVDDVLYTGRT) match the PRPP-binding motif.

Belongs to the purine/pyrimidine phosphoribosyltransferase family. PyrR subfamily. In terms of assembly, homodimer and homohexamer; in equilibrium.

It carries out the reaction UMP + diphosphate = 5-phospho-alpha-D-ribose 1-diphosphate + uracil. Regulates transcriptional attenuation of the pyrimidine nucleotide (pyr) operon by binding in a uridine-dependent manner to specific sites on pyr mRNA. This disrupts an antiterminator hairpin in the RNA and favors formation of a downstream transcription terminator, leading to a reduced expression of downstream genes. Functionally, also displays a weak uracil phosphoribosyltransferase activity which is not physiologically significant. The protein is Bifunctional protein PyrR of Macrococcus caseolyticus (strain JCSC5402) (Macrococcoides caseolyticum).